We begin with the raw amino-acid sequence, 240 residues long: 1-(5-phosphoribosyl)-5-[(5-phosphoribosylamino)methylideneamino] imidazole-4-carboxamide isomerase (240 aa).

Residue D10 is the Proton acceptor of the active site. Residue D132 is the Proton donor of the active site.

Belongs to the HisA/HisF family.

The protein resides in the cytoplasm. The enzyme catalyses 1-(5-phospho-beta-D-ribosyl)-5-[(5-phospho-beta-D-ribosylamino)methylideneamino]imidazole-4-carboxamide = 5-[(5-phospho-1-deoxy-D-ribulos-1-ylimino)methylamino]-1-(5-phospho-beta-D-ribosyl)imidazole-4-carboxamide. The protein operates within amino-acid biosynthesis; L-histidine biosynthesis; L-histidine from 5-phospho-alpha-D-ribose 1-diphosphate: step 4/9. The protein is 1-(5-phosphoribosyl)-5-[(5-phosphoribosylamino)methylideneamino] imidazole-4-carboxamide isomerase of Methanocella arvoryzae (strain DSM 22066 / NBRC 105507 / MRE50).